The chain runs to 460 residues: Bifunctional protein GlmU (460 aa).

The interval 1–235 (MALSAAIVLA…PLTVEGVNDR (235 aa)) is pyrophosphorylase. UDP-N-acetyl-alpha-D-glucosamine-binding positions include 9–12 (LAAG), K23, Q76, and 81–82 (GT). Residue D109 participates in Mg(2+) binding. Residues G146, E161, N176, and N233 each contribute to the UDP-N-acetyl-alpha-D-glucosamine site. Residue N233 participates in Mg(2+) binding. The linker stretch occupies residues 236–256 (VQLAALSKTYNRRVCERWMRD). The interval 257–460 (GVTILDPETT…VEGWKPAWER (204 aa)) is N-acetyltransferase. Residues R338 and K356 each coordinate UDP-N-acetyl-alpha-D-glucosamine. H368 functions as the Proton acceptor in the catalytic mechanism. Positions 371 and 382 each coordinate UDP-N-acetyl-alpha-D-glucosamine. Acetyl-CoA-binding positions include 391-392 (NY) and A428.

It in the N-terminal section; belongs to the N-acetylglucosamine-1-phosphate uridyltransferase family. This sequence in the C-terminal section; belongs to the transferase hexapeptide repeat family. Homotrimer. It depends on Mg(2+) as a cofactor.

It localises to the cytoplasm. It catalyses the reaction alpha-D-glucosamine 1-phosphate + acetyl-CoA = N-acetyl-alpha-D-glucosamine 1-phosphate + CoA + H(+). The catalysed reaction is N-acetyl-alpha-D-glucosamine 1-phosphate + UTP + H(+) = UDP-N-acetyl-alpha-D-glucosamine + diphosphate. The protein operates within nucleotide-sugar biosynthesis; UDP-N-acetyl-alpha-D-glucosamine biosynthesis; N-acetyl-alpha-D-glucosamine 1-phosphate from alpha-D-glucosamine 6-phosphate (route II): step 2/2. It functions in the pathway nucleotide-sugar biosynthesis; UDP-N-acetyl-alpha-D-glucosamine biosynthesis; UDP-N-acetyl-alpha-D-glucosamine from N-acetyl-alpha-D-glucosamine 1-phosphate: step 1/1. It participates in bacterial outer membrane biogenesis; LPS lipid A biosynthesis. In terms of biological role, catalyzes the last two sequential reactions in the de novo biosynthetic pathway for UDP-N-acetylglucosamine (UDP-GlcNAc). The C-terminal domain catalyzes the transfer of acetyl group from acetyl coenzyme A to glucosamine-1-phosphate (GlcN-1-P) to produce N-acetylglucosamine-1-phosphate (GlcNAc-1-P), which is converted into UDP-GlcNAc by the transfer of uridine 5-monophosphate (from uridine 5-triphosphate), a reaction catalyzed by the N-terminal domain. This Bifidobacterium longum (strain DJO10A) protein is Bifunctional protein GlmU.